Consider the following 190-residue polypeptide: Lipid A acyltransferase PagP (190 aa).

The first 24 residues, 1 to 24 (MNRYLLTTLSAPLLALFFSFSLQA), serve as a signal peptide directing secretion. Active-site residues include His-62, Asp-105, and Ser-106.

This sequence belongs to the lipid A palmitoyltransferase family. Homodimer.

The protein localises to the cell outer membrane. The enzyme catalyses a lipid A + a 1,2-diacyl-sn-glycero-3-phosphocholine = a hepta-acyl lipid A + a 2-acyl-sn-glycero-3-phosphocholine. It catalyses the reaction a lipid IVA + a 1,2-diacyl-sn-glycero-3-phosphocholine = a lipid IVB + a 2-acyl-sn-glycero-3-phosphocholine. The catalysed reaction is a lipid IIA + a 1,2-diacyl-sn-glycero-3-phosphocholine = a lipid IIB + a 2-acyl-sn-glycero-3-phosphocholine. Transfers a fatty acid residue from the sn-1 position of a phospholipid to the N-linked hydroxyfatty acid chain on the proximal unit of lipid A or its precursors. The protein is Lipid A acyltransferase PagP of Pantoea ananatis (strain LMG 20103).